A 1374-amino-acid chain; its full sequence is DNA-directed RNA polymerase subunit beta (1374 aa).

It belongs to the RNA polymerase beta chain family. As to quaternary structure, the RNAP catalytic core consists of 2 alpha, 1 beta, 1 beta' and 1 omega subunit. When a sigma factor is associated with the core the holoenzyme is formed, which can initiate transcription.

It catalyses the reaction RNA(n) + a ribonucleoside 5'-triphosphate = RNA(n+1) + diphosphate. In terms of biological role, DNA-dependent RNA polymerase catalyzes the transcription of DNA into RNA using the four ribonucleoside triphosphates as substrates. In Methylobacterium nodulans (strain LMG 21967 / CNCM I-2342 / ORS 2060), this protein is DNA-directed RNA polymerase subunit beta.